A 116-amino-acid chain; its full sequence is Large ribosomal subunit protein bL17 (116 aa).

It belongs to the bacterial ribosomal protein bL17 family. In terms of assembly, part of the 50S ribosomal subunit. Contacts protein L32.

The chain is Large ribosomal subunit protein bL17 from Prochlorococcus marinus (strain MIT 9211).